A 316-amino-acid chain; its full sequence is Tetrahydromethanopterin S-methyltransferase subunit H (316 aa).

This sequence belongs to the MtrH family. As to quaternary structure, the complex is composed of 8 subunits; MtrA, MtrB, MtrC, MtrD, MtrE, MtrF, MtrG and MtrH.

The catalysed reaction is 5-methyl-5,6,7,8-tetrahydromethanopterin + coenzyme M + 2 Na(+)(in) = 5,6,7,8-tetrahydromethanopterin + methyl-coenzyme M + 2 Na(+)(out). The protein operates within one-carbon metabolism; methanogenesis from CO(2); methyl-coenzyme M from 5,10-methylene-5,6,7,8-tetrahydromethanopterin: step 2/2. Its function is as follows. Part of a complex that catalyzes the formation of methyl-coenzyme M and tetrahydromethanopterin from coenzyme M and methyl-tetrahydromethanopterin. This is an energy-conserving, sodium-ion translocating step. MtrH catalyzes the transfer of the methyl group from methyl-tetrahydromethanopterin to the corrinoid prosthetic group of MtrA. The sequence is that of Tetrahydromethanopterin S-methyltransferase subunit H from Methanosarcina acetivorans (strain ATCC 35395 / DSM 2834 / JCM 12185 / C2A).